The sequence spans 536 residues: C-22 sterol desaturase ERG5A (536 aa).

The helical transmembrane segment at 41–61 (VWTWVFTLVALCIAYDQIAYI) threads the bilayer. C481 provides a ligand contact to heme.

It belongs to the cytochrome P450 family. Heme serves as cofactor.

It is found in the endoplasmic reticulum membrane. It carries out the reaction 5-dehydroepisterol + NADPH + O2 + H(+) = ergosta-5,7,22,24(28)-tetraen-3beta-ol + NADP(+) + 2 H2O. The protein operates within steroid metabolism; ergosterol biosynthesis. C-22 sterol desaturase; part of the third module of ergosterol biosynthesis pathway that includes the late steps of the pathway. ERG5A and ERG5B convert 5-dehydroepisterol into ergosta-5,7,22,24(28)-tetraen-3beta-ol by forming the C-22(23) double bond in the sterol side chain. The third module or late pathway involves the ergosterol synthesis itself through consecutive reactions that mainly occur in the endoplasmic reticulum (ER) membrane. Firstly, the squalene synthase ERG9 catalyzes the condensation of 2 farnesyl pyrophosphate moieties to form squalene, which is the precursor of all steroids. Squalene synthase is crucial for balancing the incorporation of farnesyl diphosphate (FPP) into sterol and nonsterol isoprene synthesis. Secondly, squalene is converted into lanosterol by the consecutive action of the squalene epoxidase ERG1 and the lanosterol synthase ERG7. Then, the delta(24)-sterol C-methyltransferase ERG6 methylates lanosterol at C-24 to produce eburicol. Eburicol is the substrate of the sterol 14-alpha demethylase encoded by CYP51A, CYP51B and CYP51C, to yield 4,4,24-trimethyl ergosta-8,14,24(28)-trienol. CYP51B encodes the enzyme primarily responsible for sterol 14-alpha-demethylation, and plays an essential role in ascospore formation. CYP51A encodes an additional sterol 14-alpha-demethylase, induced on ergosterol depletion and responsible for the intrinsic variation in azole sensitivity. The third CYP51 isoform, CYP51C, does not encode a sterol 14-alpha-demethylase, but is required for full virulence on host wheat ears. The C-14 reductase ERG24 then reduces the C14=C15 double bond which leads to 4,4-dimethylfecosterol. A sequence of further demethylations at C-4, involving the C-4 demethylation complex containing the C-4 methylsterol oxidases ERG25, the sterol-4-alpha-carboxylate 3-dehydrogenase ERG26 and the 3-keto-steroid reductase ERG27, leads to the production of fecosterol via 4-methylfecosterol. ERG28 has a role as a scaffold to help anchor ERG25, ERG26 and ERG27 to the endoplasmic reticulum. The C-8 sterol isomerase ERG2 then catalyzes the reaction which results in unsaturation at C-7 in the B ring of sterols and thus converts fecosterol to episterol. The sterol-C5-desaturases ERG3A and ERG3BB then catalyze the introduction of a C-5 double bond in the B ring to produce 5-dehydroepisterol. The C-22 sterol desaturases ERG5A and ERG5B further convert 5-dehydroepisterol into ergosta-5,7,22,24(28)-tetraen-3beta-ol by forming the C-22(23) double bond in the sterol side chain. Finally, ergosta-5,7,22,24(28)-tetraen-3beta-ol is substrate of the C-24(28) sterol reductase ERG4 to produce ergosterol. In Gibberella zeae (strain ATCC MYA-4620 / CBS 123657 / FGSC 9075 / NRRL 31084 / PH-1) (Wheat head blight fungus), this protein is C-22 sterol desaturase ERG5A.